We begin with the raw amino-acid sequence, 106 residues long: MRGNIAQLMQQAQKMQENLQRAQEELAKLEVTGSAGGSMVSVILSGTKECRKVRIDPSILNDQEMIEDLIAAAFNDASNKVDAESKERMGSATLGMSLPPGFKLPF.

It belongs to the YbaB/EbfC family. Homodimer.

Its subcellular location is the cytoplasm. The protein localises to the nucleoid. Binds to DNA and alters its conformation. May be involved in regulation of gene expression, nucleoid organization and DNA protection. In Xylella fastidiosa (strain Temecula1 / ATCC 700964), this protein is Nucleoid-associated protein PD_1058.